Reading from the N-terminus, the 136-residue chain is Large ribosomal subunit protein uL16 (136 aa).

The protein belongs to the universal ribosomal protein uL16 family. In terms of assembly, part of the 50S ribosomal subunit.

Binds 23S rRNA and is also seen to make contacts with the A and possibly P site tRNAs. The sequence is that of Large ribosomal subunit protein uL16 from Rickettsia prowazekii (strain Madrid E).